The primary structure comprises 179 residues: Probable protein archease (179 aa).

Positions 55, 178, and 179 each coordinate Ca(2+).

It belongs to the archease family.

Activates the tRNA-splicing ligase complex by facilitating the enzymatic turnover of catalytic subunit RtcB. Acts by promoting the guanylylation of RtcB, a key intermediate step in tRNA ligation. Can also alter the NTP specificity of RtcB such that ATP, dGTP or ITP is used efficiently. The polypeptide is Probable protein archease (Mycobacterium tuberculosis (strain CDC 1551 / Oshkosh)).